The primary structure comprises 110 residues: Protein YcgL (110 aa).

A YcgL domain is found at 14–98; the sequence is MFCVIYRSSK…PPEDLLKQHL (85 aa). The segment at 87-110 is disordered; that stretch reads PPPPEDLLKQHLSSVGQNTSSADR. Positions 97–110 are enriched in polar residues; sequence HLSSVGQNTSSADR.

In Salmonella newport (strain SL254), this protein is Protein YcgL.